A 74-amino-acid polypeptide reads, in one-letter code: Putative membrane protein insertion efficiency factor (74 aa).

Belongs to the UPF0161 family.

The protein localises to the cell inner membrane. Could be involved in insertion of integral membrane proteins into the membrane. The protein is Putative membrane protein insertion efficiency factor of Blochmanniella floridana.